Consider the following 278-residue polypeptide: 2-dehydro-3-deoxyphosphooctonate aldolase (278 aa).

It belongs to the KdsA family.

It is found in the cytoplasm. It carries out the reaction D-arabinose 5-phosphate + phosphoenolpyruvate + H2O = 3-deoxy-alpha-D-manno-2-octulosonate-8-phosphate + phosphate. It functions in the pathway carbohydrate biosynthesis; 3-deoxy-D-manno-octulosonate biosynthesis; 3-deoxy-D-manno-octulosonate from D-ribulose 5-phosphate: step 2/3. The protein operates within bacterial outer membrane biogenesis; lipopolysaccharide biosynthesis. This is 2-dehydro-3-deoxyphosphooctonate aldolase from Bartonella quintana (strain Toulouse) (Rochalimaea quintana).